A 381-amino-acid chain; its full sequence is GDP-mannose transporter (381 aa).

Over 1–44 the chain is Cytoplasmic; sequence MAEGKKTDDYTIQMDSIDQGNKSFEAPPPPQPRSPPSGSLSNNP. The interval 19–41 is disordered; the sequence is QGNKSFEAPPPPQPRSPPSGSLS. Residues 26–35 show a composition bias toward pro residues; it reads APPPPQPRSP. The chain crosses the membrane as a helical span at residues 45–65; that stretch reads ILPVLAYCGSSILMTVMNKYV. Over 66-70 the chain is Lumenal; sequence LSGTD. A helical transmembrane segment spans residues 71 to 91; that stretch reads FNLNFFLLCIQSLVCIIAIQT. Residues 92 to 109 are Cytoplasmic-facing; that stretch reads CKSCGLITYRDFSADEAR. The chain crosses the membrane as a helical span at residues 110 to 126; sequence KWFPITLLLIGMIYTGS. Residues 127–133 lie on the Lumenal side of the membrane; sequence KALQFLS. Residues 134-150 traverse the membrane as a helical segment; the sequence is IPVYTIFKNLTIILIAY. Residues 151-159 are Cytoplasmic-facing; that stretch reads GEVLWFGGS. Residues 160-181 form a helical membrane-spanning segment; the sequence is VTGLTLFSFGLMVLSSIIAAWA. Over 182 to 199 the chain is Lumenal; the sequence is DIKHAVESNGDATAKVST. Residues 200-220 form a helical membrane-spanning segment; the sequence is LNAGYIWMLVNCLCTSSYVLG. Residues 221–234 lie on the Cytoplasmic side of the membrane; it reads MRKRIKLTNFKDFD. The chain crosses the membrane as a helical span at residues 235–255; the sequence is TMFYNNLLSIPVLIVLSAFLE. Topologically, residues 256–273 are lumenal; sequence DWSSTNVNRNFPPMDRNS. A helical membrane pass occupies residues 274 to 294; the sequence is IVFAMILSGLSSVFISYTSAW. Over 295 to 302 the chain is Cytoplasmic; sequence CVRVTSST. The helical transmembrane segment at 303–323 threads the bilayer; it reads TYSMVGALNKLPIAISGLIFF. Topologically, residues 324–326 are lumenal; it reads DAP. The helical transmembrane segment at 327–347 threads the bilayer; that stretch reads VTFPSVSAIVVGFVSGIVYAV. Residues 348 to 381 lie on the Cytoplasmic side of the membrane; it reads AKIKQNAKPRTGVLPTANPPVSASSQSMRDSLRS. Positions 358–381 are disordered; the sequence is TGVLPTANPPVSASSQSMRDSLRS. A compositionally biased stretch (polar residues) spans 366–381; that stretch reads PPVSASSQSMRDSLRS.

Belongs to the TPT transporter family. SLC35D subfamily. In terms of assembly, homooligomer.

It localises to the golgi apparatus membrane. Its subcellular location is the cytoplasmic vesicle membrane. The protein localises to the endoplasmic reticulum membrane. In terms of biological role, involved in the import of GDP-mannose from the cytoplasm into the Golgi lumen. The chain is GDP-mannose transporter (gmt1) from Aspergillus niger (strain ATCC MYA-4892 / CBS 513.88 / FGSC A1513).